Here is a 111-residue protein sequence, read N- to C-terminus: Cytochrome c oxidase subunit 7A2-like, mitochondrial (111 aa).

Residues 1 to 54 (MYYKFSSFTQKLAGAWASEAYTPQGLKPVSTEAPPIIFATPTKLTSSVTAYDYS) constitute a mitochondrion transit peptide. K68 is modified (N6-acetyllysine). A helical transmembrane segment spans residues 79–104 (PDQMLYRTTMALTLGGTIYCLIALYM).

The protein belongs to the cytochrome c oxidase VIIa family.

It localises to the mitochondrion inner membrane. Functionally, non-functional protein. In contrast to the protein found in other strains (AC Q99KD6), cannot induce the assembly of mitochondrial respiratory supercomplexes. The chain is Cytochrome c oxidase subunit 7A2-like, mitochondrial from Mus musculus (Mouse).